A 220-amino-acid polypeptide reads, in one-letter code: UPF0319 protein Ent638_1476 (220 aa).

The N-terminal stretch at 1–20 is a signal peptide; sequence MKTGIVSAVLALVMPVCVYA.

This sequence belongs to the UPF0319 family.

The sequence is that of UPF0319 protein Ent638_1476 from Enterobacter sp. (strain 638).